A 201-amino-acid chain; its full sequence is 3-mercaptopropionate dioxygenase (201 aa).

Fe cation contacts are provided by His-89, His-91, and His-142.

The protein belongs to the cysteine dioxygenase family. In terms of assembly, forms homodimer in the crystal; however, there is no evidence that the dimer exists under physiological conditions or has biological significance. Fe(2+) serves as cofactor.

The enzyme catalyses 3-sulfanylpropanoate + O2 = 3-sulfinopropanoate + H(+). Its function is as follows. Thiol dioxygenase that catalyzes the dioxygenation of 3-mercaptopropionate (3-MPA) to 3-sulfinopropionate (3-SPA). To a lesser extent (40-fold lower efficiency), is also able to oxidize cysteine to cysteine sulfinate (CSA). Cannot use N-acetyl-L-cysteine, homocysteine, and cysteamine as substrates. The physiological role of this enzyme is unclear. This chain is 3-mercaptopropionate dioxygenase, found in Pseudomonas aeruginosa (strain ATCC 15692 / DSM 22644 / CIP 104116 / JCM 14847 / LMG 12228 / 1C / PRS 101 / PAO1).